Here is a 309-residue protein sequence, read N- to C-terminus: Olfactory receptor 8U1 (309 aa).

Residues 1–25 (MAHINCTQATEFILVGLTDHQELKM) are Extracellular-facing. Asparagine 5 is a glycosylation site (N-linked (GlcNAc...) asparagine). Residues 26-46 (PLFVLFLSIYLFTVVGNLGLI) traverse the membrane as a helical segment. Over 47–54 (LLIRADTS) the chain is Cytoplasmic. The helical transmembrane segment at 55–75 (LNTPMYFFLSNLAFVDFCYSS) threads the bilayer. At 76-99 (VITPKMLGNFLYKQNVISFDACAT) the chain is on the extracellular side. Cysteine 97 and cysteine 189 are oxidised to a cystine. The helical transmembrane segment at 100–120 (QLGCFLTFMISESLLLASMAY) threads the bilayer. The Cytoplasmic portion of the chain corresponds to 121–139 (DRYVAICNPLLYMVVMTPG). Residues 140 to 160 (ICIQLVAVPYSYSFLMALFHT) form a helical membrane-spanning segment. At 161 to 197 (ILTFRLSYCHSNIVNHFYCDDMPLLRLTCSDTRFKQL) the chain is on the extracellular side. The helical transmembrane segment at 198-217 (WIFACAGIMFISSLLIVFVS) threads the bilayer. The Cytoplasmic segment spans residues 218 to 237 (YMFIISAILRMHSAEGRQKA). Residues 238 to 258 (FSTCGSHMLAVTIFYGTLIFM) traverse the membrane as a helical segment. The Extracellular portion of the chain corresponds to 259-271 (YLQPSSSHALDTD). The chain crosses the membrane as a helical span at residues 272–292 (KMASVFYTVIIPMLNPLIYSL). Topologically, residues 293–309 (QNKEVKEALKKIIINKN) are cytoplasmic.

The protein belongs to the G-protein coupled receptor 1 family.

It localises to the cell membrane. Functionally, odorant receptor. The sequence is that of Olfactory receptor 8U1 (OR8U1) from Homo sapiens (Human).